The following is a 228-amino-acid chain: Ribosomal RNA small subunit methyltransferase G (228 aa).

S-adenosyl-L-methionine-binding positions include Gly89, Leu94, 140-141, and Arg159; that span reads VE.

This sequence belongs to the methyltransferase superfamily. RNA methyltransferase RsmG family.

It is found in the cytoplasm. It catalyses the reaction guanosine(527) in 16S rRNA + S-adenosyl-L-methionine = N(7)-methylguanosine(527) in 16S rRNA + S-adenosyl-L-homocysteine. Its function is as follows. Specifically methylates the N7 position of guanine in position 527 of 16S rRNA. The protein is Ribosomal RNA small subunit methyltransferase G of Burkholderia cenocepacia (strain ATCC BAA-245 / DSM 16553 / LMG 16656 / NCTC 13227 / J2315 / CF5610) (Burkholderia cepacia (strain J2315)).